A 102-amino-acid chain; its full sequence is Thioredoxin (102 aa).

A Thioredoxin domain is found at 1–102 (MVKVVSAENF…SLIRLINQHS (102 aa)). Cysteines 28 and 31 form a disulfide.

This sequence belongs to the thioredoxin family.

Participates in various redox reactions through the reversible oxidation of its active center dithiol to a disulfide and catalyzes dithiol-disulfide exchange reactions. The polypeptide is Thioredoxin (trxA) (Chlamydia caviae (strain ATCC VR-813 / DSM 19441 / 03DC25 / GPIC) (Chlamydophila caviae)).